Here is a 310-residue protein sequence, read N- to C-terminus: Olfactory receptor 8G3 (310 aa).

The Extracellular portion of the chain corresponds to 1–25 (MDPGNHSSVTESILAGLSEQPELQL). An N-linked (GlcNAc...) asparagine glycan is attached at N5. Residues 26–46 (RLFLLFLGICVVTVVGNLGMI) traverse the membrane as a helical segment. Residues 47–54 (TLIGLSSH) are Cytoplasmic-facing. Residues 55-75 (LHTPMYYFLSSLSFIDFCHST) form a helical membrane-spanning segment. The Extracellular segment spans residues 76-99 (VITPKMLVNFATEKNIISYPECMA). A disulfide bond links C97 and C189. A helical membrane pass occupies residues 100–120 (QLYLFSIFAIAECHMLAAMAY). The Cytoplasmic portion of the chain corresponds to 121–139 (DCYVAICSPLLYNVIMSYH). A helical transmembrane segment spans residues 140–160 (HCFWLTVGVYILGILGSTIHT). At 161–197 (SFMLRLFLCKTNVINHYFCDLFPLLGLSCSSTYINEL) the chain is on the extracellular side. Residues 198-217 (LVLVLSAFNILMPALTILAS) form a helical membrane-spanning segment. The Cytoplasmic portion of the chain corresponds to 218 to 237 (YIFIIASILRIHSTEGRSKA). A helical membrane pass occupies residues 238–258 (FSTCSSHILAVAVFFGSAAFM). Residues 259 to 271 (YLQPSSVSSMDQR) lie on the Extracellular side of the membrane. The chain crosses the membrane as a helical span at residues 272–292 (KVSSVFYTTIVPMLNPLIYSL). Residues 293–310 (RNKDVKLAVKKILHQTAC) are Cytoplasmic-facing.

Belongs to the G-protein coupled receptor 1 family.

The protein localises to the cell membrane. Functionally, odorant receptor. The chain is Olfactory receptor 8G3 from Homo sapiens (Human).